Here is a 147-residue protein sequence, read N- to C-terminus: Hemoglobin subunit beta (147 aa).

V2 bears the N-acetylvaline mark. The Globin domain maps to 3 to 147 (HLTGEEKAAV…VANALAHKYH (145 aa)). T13 carries the post-translational modification Phosphothreonine. S45 carries the post-translational modification Phosphoserine. K60 carries the N6-acetyllysine modification. Heme b is bound at residue H64. K83 is subject to N6-acetyllysine. H93 is a heme b binding site. C94 carries the post-translational modification S-nitrosocysteine. K145 bears the N6-acetyllysine mark.

It belongs to the globin family. As to quaternary structure, heterotetramer of two alpha chains and two beta chains. As to expression, red blood cells.

Its function is as follows. Involved in oxygen transport from the lung to the various peripheral tissues. In Cheracebus torquatus (Collared titi monkey), this protein is Hemoglobin subunit beta (HBB).